The primary structure comprises 278 residues: Extracellular metalloprotease GLRG_06511 (278 aa).

Residues 1-19 (MQFKSLLVSALAAASTALA) form the signal peptide. Asparagine 51 carries an N-linked (GlcNAc...) asparagine glycan. Zn(2+) is bound at residue histidine 190. The active site involves glutamate 191. Histidine 194 is a binding site for Zn(2+). Cysteine 227 and cysteine 254 are joined by a disulfide.

It belongs to the peptidase M43B family.

The protein localises to the secreted. In terms of biological role, secreted metalloproteinase that allows assimilation of proteinaceous substrates. The sequence is that of Extracellular metalloprotease GLRG_06511 from Colletotrichum graminicola (strain M1.001 / M2 / FGSC 10212) (Maize anthracnose fungus).